Reading from the N-terminus, the 616-residue chain is Protein cereblon (616 aa).

Disordered stretches follow at residues 1–39 (MDEE…DDSV), 63–137 (FGPS…AMPR), and 182–220 (SQER…DIDM). The span at 11 to 32 (AQEQEVAGSAGEAAAGPSGAEV) shows a compositional bias: low complexity. Acidic residues predominate over residues 96 to 107 (SEEDIVLDDGTE). Over residues 183–192 (QERRRSRNSD) the composition is skewed to basic and acidic residues. Residues 194-203 (VSPEAEDDEL) are compositionally biased toward acidic residues. Residues 206-215 (HPPPPPPRPP) are compositionally biased toward pro residues. The region spanning 257-482 (HMLIFLHQYI…LIGGILKEET (226 aa)) is the Lon N-terminal domain. The CULT domain maps to 481 to 590 (ETLFYCRYCN…LAGSSVRIGK (110 aa)). The Zn(2+) site is built by Cys486, Cys489, Cys555, and Cys558.

Belongs to the CRBN family. As to quaternary structure, likely a component of a DCX (DDB1-CUL4-X-box) protein ligase complex. May interact with pic/DDB1. Post-translationally, ubiquitinated.

The protein localises to the nucleus. The protein operates within protein modification; protein ubiquitination. In terms of biological role, substrate recognition component of a DCX (DDB1-CUL4-X-box) E3 protein ligase complex that mediates the ubiquitination and subsequent proteasomal degradation of target proteins. Has an essential role in mediating growth by negatively regulating insulin signaling. It also has a role in maintaining presynaptic function in the neuromuscular junction synapses of third-instar larvae. The sequence is that of Protein cereblon from Drosophila persimilis (Fruit fly).